A 210-amino-acid chain; its full sequence is Probable GTP-binding protein EngB (210 aa).

One can recognise an EngB-type G domain in the interval 30–204 (QGYEVAFAGR…YKVLAGWMEL (175 aa)). Residues 38 to 45 (GRSNAGKS), 64 to 68 (GRTQL), 82 to 85 (DLPG), 149 to 152 (TKAD), and 182 to 185 (LFSA) each bind GTP. Positions 45 and 66 each coordinate Mg(2+).

Belongs to the TRAFAC class TrmE-Era-EngA-EngB-Septin-like GTPase superfamily. EngB GTPase family. Requires Mg(2+) as cofactor.

Its function is as follows. Necessary for normal cell division and for the maintenance of normal septation. The polypeptide is Probable GTP-binding protein EngB (Pseudomonas putida (strain W619)).